A 599-amino-acid polypeptide reads, in one-letter code: Transcription factor COE4 (599 aa).

Residues 64–67 form an interaction with DNA region; sequence RKSN. The segment at 152 to 171 adopts a C5-type zinc-finger fold; the sequence is CRVLLTHEIMCSRCCDRKSC. Interaction with DNA stretches follow at residues 198 to 205 and 237 to 240; these read NCLKNAGN and NNSK. The IPT/TIG domain maps to 256–339; sequence PCIKAISPGE…KGAPGRFVYT (84 aa). Disordered stretches follow at residues 449–473 and 556–586; these read GYARSCGSASPRFAPSPGSQQSSYG and VLRPPSSPSQACPRAHREGLPDQPFEDTDKF. Low complexity predominate over residues 464–473; that stretch reads SPGSQQSSYG.

This sequence belongs to the COE family. As to quaternary structure, forms either a homodimer or a heterodimer with a related family member. In terms of tissue distribution, expressed in the olfactory epithelium, including in both neuronal and basal cell layers. Absent in the vomeronasal organ. Absent from NK cells and CD8(+) T cells.

The protein resides in the nucleus. Functionally, transcription factor. Positively modulates transcription, perhaps less strongly than other early B cell factor/EBF family proteins. Binds an EBF1/Olf-1 consensus site in vitro. The sequence is that of Transcription factor COE4 (Ebf4) from Mus musculus (Mouse).